A 281-amino-acid polypeptide reads, in one-letter code: Diaminopimelate epimerase (281 aa).

Substrate contacts are provided by N11 and N65. The Proton donor role is filled by C74. Substrate is bound by residues 75–76, N164, N197, and 215–216; these read GN and ER. C224 serves as the catalytic Proton acceptor. Residue 225–226 coordinates substrate; that stretch reads GT.

This sequence belongs to the diaminopimelate epimerase family. In terms of assembly, homodimer.

Its subcellular location is the cytoplasm. The catalysed reaction is (2S,6S)-2,6-diaminopimelate = meso-2,6-diaminopimelate. It participates in amino-acid biosynthesis; L-lysine biosynthesis via DAP pathway; DL-2,6-diaminopimelate from LL-2,6-diaminopimelate: step 1/1. In terms of biological role, catalyzes the stereoinversion of LL-2,6-diaminopimelate (L,L-DAP) to meso-diaminopimelate (meso-DAP), a precursor of L-lysine and an essential component of the bacterial peptidoglycan. This chain is Diaminopimelate epimerase, found in Heliobacterium modesticaldum (strain ATCC 51547 / Ice1).